The sequence spans 571 residues: Putative diflavin flavoprotein A 1 (571 aa).

The segment at 43–236 is zinc metallo-hydrolase; that stretch reads ENGTTYNSFL…PPVQLVATGH (194 aa). Residues histidine 92, glutamate 94, aspartate 96, histidine 159, aspartate 178, and histidine 236 each coordinate Fe cation. One can recognise a Flavodoxin-like domain in the interval 265-426; it reads VAIFYAANYG…DLDKALGRLS (162 aa). Positions 427–571 are flavodoxin-reductase-like; that stretch reads GGLYIITAQK…VHHRKVGNHY (145 aa).

In the N-terminal section; belongs to the zinc metallo-hydrolase group 3 family. It in the C-terminal section; belongs to the flavodoxin reductase family. The cofactor is Fe cation.

Its function is as follows. Mediates electron transfer from NADH to oxygen, reducing it to water. This modular protein has 3 redox cofactors, in other organisms the same activity requires 2 or 3 proteins. The sequence is that of Putative diflavin flavoprotein A 1 (dfa1) from Thermosynechococcus vestitus (strain NIES-2133 / IAM M-273 / BP-1).